The chain runs to 231 residues: Small proline-rich protein 3 (231 aa).

The interval 1 to 104 (MSSYQQKQPF…GSGYSVVPQP (104 aa)) is disordered. An N-acetylserine modification is found at Ser2. Tandem repeats lie at residues 55–62 (EQGYVKIP), 63–70 (EQGSIKVP), 71–78 (DTGYTKIP), 79–86 (DSGNTKVP), 87–94 (ESGCTSVP), 95–102 (GSGYSVVP), 103–110 (QPGYTKVP), 111–118 (DQGYTKVP), 119–126 (ESGCTSVP), 127–134 (GSGYSVVP), 135–142 (QPGYTKVP), 143–150 (ESGCTSVP), 151–158 (GPGYPTVP), 159–166 (QPGYTKVP), 167–174 (ESGCTSVP), 175–182 (GSGYSVIP), 183–190 (QPSYTKVP), 191–198 (ESGCTSVP), 199–206 (GPGYPTVP), 207–214 (QPGYTKVQ), and 215–222 (EPNPSIVT). Residues 55 to 222 (EQGYVKIPEQ…VQEPNPSIVT (168 aa)) are 21 X 8 AA approximate tandem repeats. The span at 80–94 (SGNTKVPESGCTSVP) shows a compositional bias: polar residues. The tract at residues 188 to 231 (KVPESGCTSVPGPGYPTVPQPGYTKVQEPNPSIVTPGLSQKKTK) is disordered. A compositionally biased stretch (polar residues) spans 214-231 (QEPNPSIVTPGLSQKKTK).

It belongs to the cornifin (SPRR) family. In terms of tissue distribution, suprabasal layers of the squamous epithelia of esophagus, tongue and oral mucosa.

The protein localises to the cytoplasm. Can serve as a substrate in transglutaminase-catalyzed cross linking reactions and can function as a cross-linked envelope precursor. The sequence is that of Small proline-rich protein 3 (SPRR3) from Oryctolagus cuniculus (Rabbit).